The primary structure comprises 252 residues: Pyridoxine 5'-phosphate synthase (252 aa).

3-amino-2-oxopropyl phosphate is bound at residue asparagine 7. 1-deoxy-D-xylulose 5-phosphate is bound at residue 9-10 (DH). Arginine 18 is a binding site for 3-amino-2-oxopropyl phosphate. Residue histidine 43 is the Proton acceptor of the active site. Residues arginine 45 and histidine 50 each coordinate 1-deoxy-D-xylulose 5-phosphate. Residue glutamate 70 is the Proton acceptor of the active site. Threonine 100 serves as a coordination point for 1-deoxy-D-xylulose 5-phosphate. Catalysis depends on histidine 190, which acts as the Proton donor. 3-amino-2-oxopropyl phosphate is bound by residues glycine 191 and 212–213 (GH).

The protein belongs to the PNP synthase family. As to quaternary structure, homooctamer; tetramer of dimers.

The protein resides in the cytoplasm. The catalysed reaction is 3-amino-2-oxopropyl phosphate + 1-deoxy-D-xylulose 5-phosphate = pyridoxine 5'-phosphate + phosphate + 2 H2O + H(+). It functions in the pathway cofactor biosynthesis; pyridoxine 5'-phosphate biosynthesis; pyridoxine 5'-phosphate from D-erythrose 4-phosphate: step 5/5. Catalyzes the complicated ring closure reaction between the two acyclic compounds 1-deoxy-D-xylulose-5-phosphate (DXP) and 3-amino-2-oxopropyl phosphate (1-amino-acetone-3-phosphate or AAP) to form pyridoxine 5'-phosphate (PNP) and inorganic phosphate. The polypeptide is Pyridoxine 5'-phosphate synthase (Synechococcus sp. (strain RCC307)).